A 395-amino-acid chain; its full sequence is Mannan polymerase complexes subunit MNN9 (395 aa).

Residues 2–17 (SLSLVSYRLRKNPWVN) are Cytoplasmic-facing. A helical; Signal-anchor for type II membrane protein transmembrane segment spans residues 18–33 (IFLPVLAIFLIYIIFF). At 34-395 (QRDQSLLGLN…LVYHIEEENH (362 aa)) the chain is on the lumenal side.

It belongs to the ANP1/MMN9/VAN1 family. The M-Pol I complex contains MNN9 and VAN1. The M-Pol II complex is composed of ANP1, MNN9, MNN10, MNN11 and HOC1.

It localises to the endoplasmic reticulum membrane. It is found in the golgi apparatus membrane. It participates in protein modification; protein glycosylation. The M-Pol I and M-Pol II complexes possess alpha-1,6-mannosyltransferase activity and are probably involved in the elongation of the mannan backbone of N-linked glycans on cell wall and periplasmic proteins. May also provide alpha-1,2-mannosyltransferase activity to the M-Pol I complex. The protein is Mannan polymerase complexes subunit MNN9 (MNN9) of Saccharomyces cerevisiae (strain ATCC 204508 / S288c) (Baker's yeast).